The chain runs to 1293 residues: Enterobactin synthase component F (1293 aa).

Positions 1 to 301 (MSQHLPLVAA…NVLPLGIHIA (301 aa)) are elongation/condensation. An adenylation region spans residues 482–887 (SYREMREQVV…ALPDVEQAVT (406 aa)). One can recognise a Carrier domain in the interval 971–1046 (APKAGSETII…KLATIIDGEE (76 aa)). Residue S1006 is modified to O-(pantetheine 4'-phosphoryl)serine. Positions 1066 to 1293 (PTLFCFHPAS…GPIIRATLNR (228 aa)) are thioesterase. The active-site Proton acceptor; for thioesterase activity is the H1271.

This sequence belongs to the ATP-dependent AMP-binding enzyme family. EntF subfamily. As to quaternary structure, proteins EntB, EntD, EntE and EntF are the component of the enterobactin synthase. Components probably do not form a stable complex. EntF acts as a catalytic monomer. Requires pantetheine 4'-phosphate as cofactor. In terms of processing, 4'-phosphopantetheine is transferred from CoA to a specific serine of apo-EntF by EntD. Holo-EntF so formed is then acylated with seryl-AMP.

It is found in the cytoplasm. The catalysed reaction is 3 2,3-dihydroxybenzoate + 3 L-serine + 6 ATP = enterobactin + 6 AMP + 6 diphosphate + 4 H(+). It catalyses the reaction holo-[peptidyl-carrier protein] + L-serine + ATP = L-seryl-[peptidyl-carrier protein] + AMP + diphosphate. It functions in the pathway siderophore biosynthesis; enterobactin biosynthesis. In terms of biological role, involved in the biosynthesis of the siderophore enterobactin (enterochelin), which is a macrocyclic trimeric lactone of N-(2,3-dihydroxybenzoyl)-serine. EntF catalyzes the activation of L-serine via ATP-dependent PPi exchange reaction to form seryladenylate. Activated L-serine is loaded onto the peptidyl carrier domain via a thioester linkage to the phosphopanthetheine moiety, forming seryl-S-Ppant-EntF. EntF acts then as the sole catalyst for the formation of the three amide and three ester linkages found in enterobactin, using seryladenylate and 2,3-dihydroxybenzoate-S-Ppant-EntB (DHB-S-Ppant-EntB) as substrates, via the formation of a DHB-Ser-S-Ppant-EntF intermediate. The polypeptide is Enterobactin synthase component F (entF) (Escherichia coli O157:H7).